The primary structure comprises 242 residues: Endoglucanase (242 aa).

An N-terminal signal peptide occupies residues 1–21 (MQVIVLPLVFLATFATSGSLA). The active-site Nucleophile is Asp47. N-linked (GlcNAc...) asparagine glycosylation is found at Asn79, Asn103, and Asn217.

It belongs to the glycosyl hydrolase 45 (cellulase K) family. As to expression, expressed in larval carcasses and gut, and adult gut.

It is found in the secreted. The catalysed reaction is Endohydrolysis of (1-&gt;4)-beta-D-glucosidic linkages in cellulose, lichenin and cereal beta-D-glucans.. This chain is Endoglucanase, found in Phaedon cochleariae (Mustard beetle).